The sequence spans 764 residues: Calpain-like protease palB/RIM13 (764 aa).

The Calpain catalytic domain maps to 95 to 368 (GEFYPPLTVY…FKYFYINWNP (274 aa)). Catalysis depends on residues Cys165, His318, and Asn336.

It belongs to the peptidase C2 family. PalB/RIM13 subfamily.

Functionally, required for the proteolytic cleavage of the transcription factor RIM101 in response to alkaline ambient pH. This is Calpain-like protease palB/RIM13 from Debaryomyces hansenii (strain ATCC 36239 / CBS 767 / BCRC 21394 / JCM 1990 / NBRC 0083 / IGC 2968) (Yeast).